Here is a 360-residue protein sequence, read N- to C-terminus: GTP 3',8-cyclase (360 aa).

Positions 1–31 (MTVTALGVPTVRGRSEGSAVASDAPGDGPLL) are disordered. The Radical SAM core domain maps to 33–251 (RFGRSATDLR…LQPHFRLRPD (219 aa)). R42 contributes to the GTP binding site. [4Fe-4S] cluster contacts are provided by C49 and C53. Y55 serves as a coordination point for S-adenosyl-L-methionine. C56 contacts [4Fe-4S] cluster. R93 is a binding site for GTP. Residue G97 participates in S-adenosyl-L-methionine binding. T124 is a binding site for GTP. S148 provides a ligand contact to S-adenosyl-L-methionine. K185 is a binding site for GTP. M219 provides a ligand contact to S-adenosyl-L-methionine. [4Fe-4S] cluster contacts are provided by C287 and C290. 292-294 (RTR) contributes to the GTP binding site. Residue C304 participates in [4Fe-4S] cluster binding.

It belongs to the radical SAM superfamily. MoaA family. In terms of assembly, monomer and homodimer. [4Fe-4S] cluster serves as cofactor.

It carries out the reaction GTP + AH2 + S-adenosyl-L-methionine = (8S)-3',8-cyclo-7,8-dihydroguanosine 5'-triphosphate + 5'-deoxyadenosine + L-methionine + A + H(+). It functions in the pathway cofactor biosynthesis; molybdopterin biosynthesis. Functionally, catalyzes the cyclization of GTP to (8S)-3',8-cyclo-7,8-dihydroguanosine 5'-triphosphate. The sequence is that of GTP 3',8-cyclase from Mycobacterium ulcerans (strain Agy99).